We begin with the raw amino-acid sequence, 76 residues long: Small ribosomal subunit protein bS18 (76 aa).

Belongs to the bacterial ribosomal protein bS18 family. In terms of assembly, part of the 30S ribosomal subunit. Forms a tight heterodimer with protein bS6.

Functionally, binds as a heterodimer with protein bS6 to the central domain of the 16S rRNA, where it helps stabilize the platform of the 30S subunit. The sequence is that of Small ribosomal subunit protein bS18 from Methylococcus capsulatus (strain ATCC 33009 / NCIMB 11132 / Bath).